Consider the following 355-residue polypeptide: Glutamine synthetase root isozyme 4 (355 aa).

A GS beta-grasp domain is found at I19 to G99. The disordered stretch occupies residues A37 to E66. The 250-residue stretch at K106–P355 folds into the GS catalytic domain.

The protein belongs to the glutamine synthetase family. In terms of assembly, homooctamer. As to expression, found in all the tissues examined with higher expression found in tissues of the root, stem and seedling shoot.

It localises to the cytoplasm. The catalysed reaction is L-glutamate + NH4(+) + ATP = L-glutamine + ADP + phosphate + H(+). In terms of biological role, plays a role in the flow of nitrogen into nitrogenous organic compounds. The sequence is that of Glutamine synthetase root isozyme 4 (GLN5) from Zea mays (Maize).